Consider the following 194-residue polypeptide: Translation machinery-associated protein 22 (194 aa).

In terms of domain architecture, SUI1 spans V102 to Y173.

It belongs to the DENR family. In terms of assembly, interacts with the 40S ribosomal subunit.

The protein localises to the cytoplasm. The protein is Translation machinery-associated protein 22 (tma22) of Aspergillus clavatus (strain ATCC 1007 / CBS 513.65 / DSM 816 / NCTC 3887 / NRRL 1 / QM 1276 / 107).